The chain runs to 41 residues: MKPPNPTNPNDQNVELNRTSLYWGLLLIFVLAVPFSNYFFN.

Residues 20–40 (SLYWGLLLIFVLAVPFSNYFF) traverse the membrane as a helical segment.

The protein belongs to the PsbL family. As to quaternary structure, PSII is composed of 1 copy each of membrane proteins PsbA, PsbB, PsbC, PsbD, PsbE, PsbF, PsbH, PsbI, PsbJ, PsbK, PsbL, PsbM, PsbT, PsbX, PsbY, PsbZ, Psb30/Ycf12, at least 3 peripheral proteins of the oxygen-evolving complex and a large number of cofactors. It forms dimeric complexes.

It is found in the plastid. Its subcellular location is the chloroplast thylakoid membrane. Its function is as follows. One of the components of the core complex of photosystem II (PSII). PSII is a light-driven water:plastoquinone oxidoreductase that uses light energy to abstract electrons from H(2)O, generating O(2) and a proton gradient subsequently used for ATP formation. It consists of a core antenna complex that captures photons, and an electron transfer chain that converts photonic excitation into a charge separation. This subunit is found at the monomer-monomer interface and is required for correct PSII assembly and/or dimerization. The protein is Photosystem II reaction center protein L of Pinus koraiensis (Korean pine).